Reading from the N-terminus, the 444-residue chain is N-succinylarginine dihydrolase (444 aa).

Substrate contacts are provided by residues 19–28, Asn110, and 137–138; these read AGLSFGNVAS and HR. The active site involves Glu174. Substrate is bound at residue Arg214. His250 is an active-site residue. The substrate site is built by Asp252 and Asn362. Residue Cys368 is the Nucleophile of the active site.

It belongs to the succinylarginine dihydrolase family. In terms of assembly, homodimer.

It carries out the reaction N(2)-succinyl-L-arginine + 2 H2O + 2 H(+) = N(2)-succinyl-L-ornithine + 2 NH4(+) + CO2. It participates in amino-acid degradation; L-arginine degradation via AST pathway; L-glutamate and succinate from L-arginine: step 2/5. Functionally, catalyzes the hydrolysis of N(2)-succinylarginine into N(2)-succinylornithine, ammonia and CO(2). The sequence is that of N-succinylarginine dihydrolase from Shewanella oneidensis (strain ATCC 700550 / JCM 31522 / CIP 106686 / LMG 19005 / NCIMB 14063 / MR-1).